Reading from the N-terminus, the 351-residue chain is Minor outer capsid protein P9 (351 aa).

Residues 246-308 (GVPAALPQPD…KAVPSGNVSA (63 aa)) are disordered. The span at 285–297 (MIRKKVETSKDAP) shows a compositional bias: basic and acidic residues.

The protein belongs to the phytoreovirus minor outer capsid protein P9 family.

It is found in the virion. The protein resides in the host cytoplasm. In terms of biological role, minor outer capsid protein. This chain is Minor outer capsid protein P9, found in Rice dwarf virus (isolate O) (RDV).